A 182-amino-acid polypeptide reads, in one-letter code: Nuclear cap-binding protein subunit 2 (182 aa).

MRNA contacts are provided by residues Tyr-13, Tyr-35, 104 to 108 (RADLD), 115 to 119 (RQYGR), and 125 to 126 (QV). The 79-residue stretch at 32–110 (NCVYVGNLSF…RIIRADLDHG (79 aa)) folds into the RRM domain. The disordered stretch occupies residues 114-182 (GRQYGRGASG…NPRYNRWKKN (69 aa)). Basic and acidic residues predominate over residues 126 to 136 (VRDEMREEFDP). A compositionally biased stretch (polar residues) spans 145–175 (RQPTSSRQLANYSGISSAPLGSSLELQSNPR).

It belongs to the RRM NCBP2 family. Component of the nuclear cap-binding complex (CBC), a heterodimer composed of cbc1 and cbc2 that interacts with capped RNAs.

It localises to the cytoplasm. It is found in the perinuclear region. Its subcellular location is the nucleus. In terms of biological role, component of the CBC complex, which binds co-transcriptionally to the 5' cap of pre-mRNAs and is involved in maturation, export and degradation of nuclear mRNAs. The polypeptide is Nuclear cap-binding protein subunit 2 (cbc2) (Schizosaccharomyces pombe (strain 972 / ATCC 24843) (Fission yeast)).